The sequence spans 103 residues: Large ribosomal subunit protein uL24 (103 aa).

This sequence belongs to the universal ribosomal protein uL24 family. Part of the 50S ribosomal subunit.

One of two assembly initiator proteins, it binds directly to the 5'-end of the 23S rRNA, where it nucleates assembly of the 50S subunit. Functionally, one of the proteins that surrounds the polypeptide exit tunnel on the outside of the subunit. The sequence is that of Large ribosomal subunit protein uL24 from Syntrophomonas wolfei subsp. wolfei (strain DSM 2245B / Goettingen).